Reading from the N-terminus, the 499-residue chain is Aspartyl/glutamyl-tRNA(Asn/Gln) amidotransferase subunit B (499 aa).

This sequence belongs to the GatB/GatE family. GatB subfamily. As to quaternary structure, heterotrimer of A, B and C subunits.

The catalysed reaction is L-glutamyl-tRNA(Gln) + L-glutamine + ATP + H2O = L-glutaminyl-tRNA(Gln) + L-glutamate + ADP + phosphate + H(+). It catalyses the reaction L-aspartyl-tRNA(Asn) + L-glutamine + ATP + H2O = L-asparaginyl-tRNA(Asn) + L-glutamate + ADP + phosphate + 2 H(+). Allows the formation of correctly charged Asn-tRNA(Asn) or Gln-tRNA(Gln) through the transamidation of misacylated Asp-tRNA(Asn) or Glu-tRNA(Gln) in organisms which lack either or both of asparaginyl-tRNA or glutaminyl-tRNA synthetases. The reaction takes place in the presence of glutamine and ATP through an activated phospho-Asp-tRNA(Asn) or phospho-Glu-tRNA(Gln). The protein is Aspartyl/glutamyl-tRNA(Asn/Gln) amidotransferase subunit B of Bartonella bacilliformis (strain ATCC 35685 / KC583 / Herrer 020/F12,63).